The sequence spans 467 residues: Iroquois-class homeodomain protein irx-1 (467 aa).

The segment at residues 126–188 (DPGRPKNATR…NARRRLKKEN (63 aa)) is a DNA-binding region (homeobox; TALE-type). Disordered regions lie at residues 198-307 (EDDN…PHNK), 319-342 (SPDG…PIQH), and 410-467 (SLSS…LPSA). Composition is skewed to acidic residues over residues 215–225 (EDDEEIDLESI) and 233–244 (NDGEQSNEEEDE). The segment covering 245 to 262 (KLEHLRQGEKESFKKESE) has biased composition (basic and acidic residues). Basic and acidic residues predominate over residues 415–431 (KTPERTSPKHSDRENLP). Residues 447-460 (RENTLSQQEGTSRI) are compositionally biased toward polar residues.

Belongs to the TALE/IRO homeobox family. As to expression, expressed in the neural plate in overlapping patterns with other irx members, which all share an anterior border of expression. Also expressed in the mesoderm, placodes and notochord. Broadly expressed in the tailbud rhombencephalon (hindbrain). Outside the nervous system and at tailbud stages, expressed in the developing otic vesicle, branchial arches, prospective heart region and pronephros.

Its subcellular location is the nucleus. Its function is as follows. Acts partially redundantly with other irx members in neural patterning. Required for formation of the posterior forebrain, midbrain, hindbrain, and to a lesser extent, spinal cord. Acts early in neural plate development to induce expression of some but not all proneural genes, and specify a neural precursor state. Also up-regulates repressors that prevent neuronal differentiation. Patterns the neuroectoderm in both the anterior/posterior and dorsal/ventral axes. Acts primarily as a transcriptional repressor during neural development, and binds to the bmp4 promoter to repress gene expression and thus mediate down-regulation of bmp4 by wnt signaling. Controls multiple processes through bmp4-repression including neural plate development, neural crest specification and Spemann organizer development. Involved in the specification of the preplacodal field at the anterior border of the neural plate. Regulates the genetic cascade of interactions that are necessary for positioning the isthmus organizer and the formation of the midbrain-hindbrain boundary. Required during at least two stages of pronephros kidney development; during neurula stages, maintains transcription of key renal genes to define the size and identity of the pronephric anlage, probably in part through regulation of bmp-signaling. Subsequently required for proper formation of the intermediate tubule segment of the pronephros. Acts principally as a transcriptional activator during pronephros development. In Xenopus tropicalis (Western clawed frog), this protein is Iroquois-class homeodomain protein irx-1.